Here is a 428-residue protein sequence, read N- to C-terminus: MTRRRSAPASWLLVSLLGVATSLEVSESPGSVQVARGQTAVLPCAFSTSAALLNLNVIWMVIPLSNANQPEQVILYQGGQMFDGALRFHGRVGFTGTMPATNVSIFINNTQLSDTGTYQCLVNNLPDRGGRNIGVTGLTVLVPPSAPQCQIQGSQDLGSDVILLCSSEEGIPRPTYLWEKLDNTLKLPPTATQDQVQGTVTIRNISALSSGLYQCVASNAIGTSTCLLDLQVISPQPRSVGVIAGAVGTGAVLIVICLALISGAFFYWRSKNKEEEEEEIPNEIREDDLPPKCSSAKAFHTEISSSENNTLTSSNTYNSRYWNNNPKPHRNTESFNHFSDLRQSFSGNAVIPSIYANGNHLVLGPHKTLVVTANRGSSPQVLPRNNGSVSRKPWPQHTHSYTVSQMTLERIGAVPVMVPAQSRAGSLV.

Positions 1 to 22 are cleaved as a signal peptide; sequence MTRRRSAPASWLLVSLLGVATS. An Ig-like V-type domain is found at 23–136; it reads LEVSESPGSV…DRGGRNIGVT (114 aa). Residues 23–240 lie on the Extracellular side of the membrane; that stretch reads LEVSESPGSV…QVISPQPRSV (218 aa). Intrachain disulfides connect cysteine 44-cysteine 120 and cysteine 165-cysteine 215. N-linked (GlcNAc...) asparagine glycosylation occurs at asparagine 102. Positions 144–234 constitute an Ig-like C2-type domain; it reads PSAPQCQIQG…TCLLDLQVIS (91 aa). Residues 241-261 traverse the membrane as a helical segment; the sequence is GVIAGAVGTGAVLIVICLALI. The Cytoplasmic portion of the chain corresponds to 262–428; the sequence is SGAFFYWRSK…PAQSRAGSLV (167 aa). Arginine 375 carries the post-translational modification Omega-N-methylarginine. The span at 376–389 shows a compositional bias: polar residues; that stretch reads GSSPQVLPRNNGSV. A disordered region spans residues 376–396; it reads GSSPQVLPRNNGSVSRKPWPQ.

In terms of processing, N-glycosylated. In terms of tissue distribution, highly expressed in testis and detected in kidney and adrenal gland. In brain, expressed in commissure fibers of the corpus callosum and pyramidal cell layers of the dentate gyrus and hippocampus where it is probably expressed by both neurons and glial cells.

Its subcellular location is the cell membrane. In terms of biological role, functions as a cell adhesion molecule through homophilic interaction. Stimulates cell growth. This Mus musculus (Mouse) protein is Immunoglobulin superfamily member 11 (Igsf11).